The sequence spans 413 residues: Multifunctional CCA protein (413 aa).

2 residues coordinate ATP: glycine 8 and arginine 11. Positions 8 and 11 each coordinate CTP. The Mg(2+) site is built by glutamate 21 and aspartate 23. Residues arginine 91, arginine 137, and arginine 140 each coordinate ATP. Positions 91, 137, and 140 each coordinate CTP. Residues 228–329 (CGIHTLMSLR…WRLLQRLDVL (102 aa)) form the HD domain.

The protein belongs to the tRNA nucleotidyltransferase/poly(A) polymerase family. Bacterial CCA-adding enzyme type 1 subfamily. In terms of assembly, monomer. Can also form homodimers and oligomers. The cofactor is Mg(2+). Requires Ni(2+) as cofactor.

The enzyme catalyses a tRNA precursor + 2 CTP + ATP = a tRNA with a 3' CCA end + 3 diphosphate. The catalysed reaction is a tRNA with a 3' CCA end + 2 CTP + ATP = a tRNA with a 3' CCACCA end + 3 diphosphate. Catalyzes the addition and repair of the essential 3'-terminal CCA sequence in tRNAs without using a nucleic acid template. Adds these three nucleotides in the order of C, C, and A to the tRNA nucleotide-73, using CTP and ATP as substrates and producing inorganic pyrophosphate. tRNA 3'-terminal CCA addition is required both for tRNA processing and repair. Also involved in tRNA surveillance by mediating tandem CCA addition to generate a CCACCA at the 3' terminus of unstable tRNAs. While stable tRNAs receive only 3'-terminal CCA, unstable tRNAs are marked with CCACCA and rapidly degraded. The protein is Multifunctional CCA protein of Acinetobacter baylyi (strain ATCC 33305 / BD413 / ADP1).